The chain runs to 413 residues: MLDLKFIRENTELVRKAVAARNTDAPIDEILELDSCRRTLSQELDTLRAKRKIIAKQRDEAAIEEGRVLRGRISELETGLSEVEEKLTDRLLRVPNIPDASVPVGKDESENVVLYYRGEKRNFSFTPKPHWELGEALDIIDFDRGIKLSGSRFYILKGEGARLQRALIAFMLDLHTRKHGYTEIYPPYMIKRECLVASGNLPKFADNLYHDAEEDYWWVPTAEAPLTNLHRDEILSVEQLPIHYVAYTACFRREKMSAGKDVRGIKRLHQFDKVELYKYCKPEDSFDELEKMVADAEEIADALKIPYRLKQLVTADISFGSAKSYDIEMYSPGVDEWLEVSSCSNCTDFQGRRANVRFRRTPEAKPEFVHTLNGSGLALPRVMISVIENYQLPDGSIVVPEVLRPFMGVDAIC.

Residue 221–223 participates in L-serine binding; that stretch reads TAE. 252–254 lines the ATP pocket; sequence RRE. Glu275 contributes to the L-serine binding site. 339–342 contributes to the ATP binding site; it reads EVSS. Ser375 serves as a coordination point for L-serine.

This sequence belongs to the class-II aminoacyl-tRNA synthetase family. Type-1 seryl-tRNA synthetase subfamily. As to quaternary structure, homodimer. The tRNA molecule binds across the dimer.

Its subcellular location is the cytoplasm. The enzyme catalyses tRNA(Ser) + L-serine + ATP = L-seryl-tRNA(Ser) + AMP + diphosphate + H(+). It carries out the reaction tRNA(Sec) + L-serine + ATP = L-seryl-tRNA(Sec) + AMP + diphosphate + H(+). Its pathway is aminoacyl-tRNA biosynthesis; selenocysteinyl-tRNA(Sec) biosynthesis; L-seryl-tRNA(Sec) from L-serine and tRNA(Sec): step 1/1. Catalyzes the attachment of serine to tRNA(Ser). Is also able to aminoacylate tRNA(Sec) with serine, to form the misacylated tRNA L-seryl-tRNA(Sec), which will be further converted into selenocysteinyl-tRNA(Sec). The sequence is that of Serine--tRNA ligase from Dehalococcoides mccartyi (strain ATCC BAA-2266 / KCTC 15142 / 195) (Dehalococcoides ethenogenes (strain 195)).